Consider the following 215-residue polypeptide: Large ribosomal subunit protein uL16m (215 aa).

The N-terminal 36 residues, 1-36, are a transit peptide targeting the mitochondrion; it reads MALQQYNKFPFFFSGILGPTRLNGLQMPPIQTMVRW.

It belongs to the universal ribosomal protein uL16 family. As to quaternary structure, component of the mitochondrial large ribosomal subunit (mt-LSU). Mature yeast 74S mitochondrial ribosomes consist of a small (37S) and a large (54S) subunit. The 37S small subunit contains a 15S ribosomal RNA (15S mt-rRNA) and at least 32 different proteins. The 54S large subunit contains a 21S rRNA (21S mt-rRNA) and at least 45 different proteins.

It is found in the mitochondrion. In terms of biological role, component of the mitochondrial ribosome (mitoribosome), a dedicated translation machinery responsible for the synthesis of mitochondrial genome-encoded proteins, including at least some of the essential transmembrane subunits of the mitochondrial respiratory chain. The mitoribosomes are attached to the mitochondrial inner membrane and translation products are cotranslationally integrated into the membrane. The sequence is that of Large ribosomal subunit protein uL16m (mrpl16) from Schizosaccharomyces pombe (strain 972 / ATCC 24843) (Fission yeast).